The sequence spans 261 residues: 4-phosphopantoate--beta-alanine ligase (261 aa).

ATP is bound by residues Arg-17, Arg-39, Asp-181–Asn-183, Arg-187–Ser-188, and Asn-199–Ile-200.

The protein belongs to the archaeal phosphopantothenate synthetase family. As to quaternary structure, homodimer.

It catalyses the reaction (R)-4-phosphopantoate + beta-alanine + ATP = (R)-4'-phosphopantothenate + AMP + diphosphate + H(+). Its pathway is cofactor biosynthesis; coenzyme A biosynthesis. With respect to regulation, activity is not affected by 4'-phosphopantothenate or CoA/acetyl-CoA. Its function is as follows. Catalyzes the condensation of (R)-4-phosphopantoate and beta-alanine to 4'-phosphopantothenate in the CoA biosynthesis pathway. Cannot use (R)-pantoate as substrate and thus does not display pantothenate synthetase (PS) activity. Displays strict specificity for its natural substrates, 4-phosphopantoate, ATP and beta-alanine. This is 4-phosphopantoate--beta-alanine ligase from Thermococcus kodakarensis (strain ATCC BAA-918 / JCM 12380 / KOD1) (Pyrococcus kodakaraensis (strain KOD1)).